The primary structure comprises 94 residues: MIRSELIQKIADENPHLYQRDVERIVNTIFEEVTGAMARGDRVELRGFGAFSVKKRDARIGRNPRTGETVHVEEKHVPFFKTGKLLRDRLNGKS.

It belongs to the bacterial histone-like protein family. In terms of assembly, heterodimer of an alpha and a beta chain.

Its function is as follows. This protein is one of the two subunits of integration host factor, a specific DNA-binding protein that functions in genetic recombination as well as in transcriptional and translational control. The sequence is that of Integration host factor subunit beta from Roseobacter denitrificans (strain ATCC 33942 / OCh 114) (Erythrobacter sp. (strain OCh 114)).